Here is a 311-residue protein sequence, read N- to C-terminus: 4-hydroxy-tetrahydrodipicolinate synthase (311 aa).

Pyruvate is bound at residue Thr51. Catalysis depends on Tyr140, which acts as the Proton donor/acceptor. Lys168 functions as the Schiff-base intermediate with substrate in the catalytic mechanism. Ile209 is a binding site for pyruvate.

This sequence belongs to the DapA family. As to quaternary structure, homotetramer; dimer of dimers.

It is found in the cytoplasm. The catalysed reaction is L-aspartate 4-semialdehyde + pyruvate = (2S,4S)-4-hydroxy-2,3,4,5-tetrahydrodipicolinate + H2O + H(+). The protein operates within amino-acid biosynthesis; L-lysine biosynthesis via DAP pathway; (S)-tetrahydrodipicolinate from L-aspartate: step 3/4. Functionally, catalyzes the condensation of (S)-aspartate-beta-semialdehyde [(S)-ASA] and pyruvate to 4-hydroxy-tetrahydrodipicolinate (HTPA). This chain is 4-hydroxy-tetrahydrodipicolinate synthase, found in Streptococcus pneumoniae (strain Hungary19A-6).